Reading from the N-terminus, the 177-residue chain is Large ribosomal subunit protein uL6 (177 aa).

Belongs to the universal ribosomal protein uL6 family. Part of the 50S ribosomal subunit.

In terms of biological role, this protein binds to the 23S rRNA, and is important in its secondary structure. It is located near the subunit interface in the base of the L7/L12 stalk, and near the tRNA binding site of the peptidyltransferase center. The sequence is that of Large ribosomal subunit protein uL6 from Neisseria meningitidis serogroup C (strain 053442).